We begin with the raw amino-acid sequence, 139 residues long: Endoribonuclease YbeY (139 aa).

Positions 107, 111, and 117 each coordinate Zn(2+).

It belongs to the endoribonuclease YbeY family. The cofactor is Zn(2+).

It localises to the cytoplasm. Its function is as follows. Single strand-specific metallo-endoribonuclease involved in late-stage 70S ribosome quality control and in maturation of the 3' terminus of the 16S rRNA. The sequence is that of Endoribonuclease YbeY from Bacteroides fragilis (strain ATCC 25285 / DSM 2151 / CCUG 4856 / JCM 11019 / LMG 10263 / NCTC 9343 / Onslow / VPI 2553 / EN-2).